The following is a 438-amino-acid chain: Dol-P-Man:Man(5)GlcNAc(2)-PP-Dol alpha-1,3-mannosyltransferase (438 aa).

The residue at position 13 (Ser13) is a Phosphoserine. 11 consecutive transmembrane segments (helical) span residues 41-61, 95-115, 123-143, 149-169, 172-192, 203-223, 231-251, 289-309, 332-352, 356-376, and 407-427; these read YTLL…FWVI, TGPL…YYAT, MAQN…FLIY, VPPF…SIFV, LFND…LLAQ, LAVS…FLLL, ALPK…PFLL, FHLA…LCRW, PLTP…GICF, LHYQ…WAMP, and AALH…PQPF.

This sequence belongs to the glycosyltransferase ALG3 family.

The protein localises to the endoplasmic reticulum membrane. The enzyme catalyses an alpha-D-Man-(1-&gt;2)-alpha-D-Man-(1-&gt;2)-alpha-D-Man-(1-&gt;3)-[alpha-D-Man-(1-&gt;6)]-beta-D-Man-(1-&gt;4)-beta-D-GlcNAc-(1-&gt;4)-alpha-D-GlcNAc-diphospho-di-trans,poly-cis-dolichol + a di-trans,poly-cis-dolichyl beta-D-mannosyl phosphate = an alpha-D-Man-(1-&gt;2)-alpha-D-Man-(1-&gt;2)-alpha-D-Man-(1-&gt;3)-[alpha-D-Man-(1-&gt;3)-alpha-D-Man-(1-&gt;6)]-beta-D-Man-(1-&gt;4)-beta-D-GlcNAc-(1-&gt;4)-alpha-D-GlcNAc-diphospho-di-trans,poly-cis-dolichol + a di-trans,poly-cis-dolichyl phosphate + H(+). The protein operates within protein modification; protein glycosylation. Functionally, dol-P-Man:Man(5)GlcNAc(2)-PP-Dol alpha-1,3-mannosyltransferase that operates in the biosynthetic pathway of dolichol-linked oligosaccharides, the glycan precursors employed in protein asparagine (N)-glycosylation. The assembly of dolichol-linked oligosaccharides begins on the cytosolic side of the endoplasmic reticulum membrane and finishes in its lumen. The sequential addition of sugars to dolichol pyrophosphate produces dolichol-linked oligosaccharides containing fourteen sugars, including two GlcNAcs, nine mannoses and three glucoses. Once assembled, the oligosaccharide is transferred from the lipid to nascent proteins by oligosaccharyltransferases. In the lumen of the endoplasmic reticulum, adds the first dolichyl beta-D-mannosyl phosphate derived mannose in an alpha-1,3 linkage to Man(5)GlcNAc(2)-PP-dolichol to produce Man(6)GlcNAc(2)-PP-dolichol. Man(6)GlcNAc(2)-PP-dolichol is a substrate for ALG9, the following enzyme in the biosynthetic pathway. The protein is Dol-P-Man:Man(5)GlcNAc(2)-PP-Dol alpha-1,3-mannosyltransferase of Homo sapiens (Human).